A 219-amino-acid chain; its full sequence is Large ribosomal subunit protein bL25 (219 aa).

A disordered region spans residues 195 to 219 (EETTTTETSNEPEVIKKGKKEEEEK). Residues 197–206 (TTTTETSNEP) are compositionally biased toward low complexity. A compositionally biased stretch (basic and acidic residues) spans 207-219 (EVIKKGKKEEEEK).

Belongs to the bacterial ribosomal protein bL25 family. CTC subfamily. Part of the 50S ribosomal subunit; part of the 5S rRNA/L5/L18/L25 subcomplex. Contacts the 5S rRNA. Binds to the 5S rRNA independently of L5 and L18.

Functionally, this is one of the proteins that binds to the 5S RNA in the ribosome where it forms part of the central protuberance. This chain is Large ribosomal subunit protein bL25, found in Fervidobacterium nodosum (strain ATCC 35602 / DSM 5306 / Rt17-B1).